Here is a 331-residue protein sequence, read N- to C-terminus: Cathepsin S (331 aa).

Positions 1–16 (MKWLVGLLPLCSYAVA) are cleaved as a signal peptide. The propeptide at 17 to 114 (QVHKDPTLDH…VTYRSNSNQK (98 aa)) is activation peptide. A glycan (N-linked (GlcNAc...) asparagine) is linked at N104. 4 disulfides stabilise this stretch: C126-C224, C136-C180, C170-C213, and C272-C320. C139 is an active-site residue. Active-site residues include H278 and N298.

This sequence belongs to the peptidase C1 family.

The protein resides in the lysosome. The protein localises to the secreted. Its subcellular location is the cytoplasmic vesicle. It is found in the phagosome. It catalyses the reaction Similar to cathepsin L, but with much less activity on Z-Phe-Arg-|-NHMec, and more activity on the Z-Val-Val-Arg-|-Xaa compound.. Its function is as follows. Thiol protease. Key protease responsible for the removal of the invariant chain from MHC class II molecules and MHC class II antigen presentation. The bond-specificity of this proteinase is in part similar to the specificities of cathepsin L. The polypeptide is Cathepsin S (CTSS) (Canis lupus familiaris (Dog)).